We begin with the raw amino-acid sequence, 750 residues long: Serine/threonine-protein kinase GE16371 (750 aa).

2 Doublecortin domains span residues 159 to 245 and 315 to 398; these read LRIK…VEYN and RIVT…AEDF. Positions 479–737 constitute a Protein kinase domain; it reads YTLGKIIGDG…SEDILDHYWT (259 aa). ATP contacts are provided by residues 485-493 and K508; that span reads IGDGNFAIV. The active-site Proton acceptor is D600.

The protein belongs to the protein kinase superfamily. CAMK Ser/Thr protein kinase family. CaMK subfamily.

The catalysed reaction is L-seryl-[protein] + ATP = O-phospho-L-seryl-[protein] + ADP + H(+). The enzyme catalyses L-threonyl-[protein] + ATP = O-phospho-L-threonyl-[protein] + ADP + H(+). The polypeptide is Serine/threonine-protein kinase GE16371 (Drosophila yakuba (Fruit fly)).